The primary structure comprises 180 residues: ADP-ribosylation factor-like protein 1 (180 aa).

A lipid anchor (N-myristoyl glycine) is attached at Gly2. Residues 23 to 30 (GLDGAGKT), 66 to 70 (DLGGQ), and 125 to 128 (NKQD) contribute to the GTP site.

Belongs to the small GTPase superfamily. Arf family. In terms of tissue distribution, expressed in neuronal cells. Expression in hypodermal tissues is absent.

It is found in the golgi apparatus. Its subcellular location is the cytoplasm. The protein resides in the cytoplasmic granule. Its function is as follows. GTP-binding protein that may be involved in protein trafficking; may modulate vesicle budding and uncoating within the Golgi apparatus. Plays a role in male tail tip morphogenesis. The protein is ADP-ribosylation factor-like protein 1 of Caenorhabditis elegans.